A 432-amino-acid chain; its full sequence is Neuronal pentraxin-2 (432 aa).

The signal sequence occupies residues 1 to 14; sequence MLALLTAGVALAVA. N-linked (GlcNAc...) asparagine glycosylation is found at N149 and N190. One can recognise a Pentraxin (PTX) domain in the interval 224-425; it reads DAFKVSLPLR…GASKWPVETC (202 aa). An intrachain disulfide couples C254 to C314. Residues N278, E356, Q357, D358, and Q368 each contribute to the Ca(2+) site. The N-linked (GlcNAc...) asparagine glycan is linked to N394.

As to quaternary structure, homooligomer or heterooligomer (probably pentamer) with neuronal pentraxin receptor (NPTXR). Ca(2+) is required as a cofactor.

It is found in the secreted. Functionally, likely to play role in the modification of cellular properties that underlie long-term plasticity. Binds to agar matrix in a calcium-dependent manner. The chain is Neuronal pentraxin-2 (Nptx2) from Rattus norvegicus (Rat).